The chain runs to 673 residues: UvrABC system protein B (673 aa).

A Helicase ATP-binding domain is found at 26–414; sequence EGLEDGLAHQ…GDEVVDQVVR (389 aa). An ATP-binding site is contributed by 39-46; the sequence is GVTGSGKT. Residues 92 to 115 carry the Beta-hairpin motif; it reads YYDYYQPEAYVPSSDTFIEKDASV. A Helicase C-terminal domain is found at 431 to 597; that stretch reads QVDDLLSEIR…GLNKKVVDIL (167 aa). The UVR domain occupies 633 to 668; the sequence is QQKIHELEEQMMQHAQNLEFEEAAQIRDQLHQLREL.

It belongs to the UvrB family. Forms a heterotetramer with UvrA during the search for lesions. Interacts with UvrC in an incision complex.

Its subcellular location is the cytoplasm. The UvrABC repair system catalyzes the recognition and processing of DNA lesions. A damage recognition complex composed of 2 UvrA and 2 UvrB subunits scans DNA for abnormalities. Upon binding of the UvrA(2)B(2) complex to a putative damaged site, the DNA wraps around one UvrB monomer. DNA wrap is dependent on ATP binding by UvrB and probably causes local melting of the DNA helix, facilitating insertion of UvrB beta-hairpin between the DNA strands. Then UvrB probes one DNA strand for the presence of a lesion. If a lesion is found the UvrA subunits dissociate and the UvrB-DNA preincision complex is formed. This complex is subsequently bound by UvrC and the second UvrB is released. If no lesion is found, the DNA wraps around the other UvrB subunit that will check the other stand for damage. In Salmonella typhi, this protein is UvrABC system protein B.